A 243-amino-acid polypeptide reads, in one-letter code: Probable fructoselysine utilization operon transcriptional repressor (243 aa).

One can recognise an HTH gntR-type domain in the interval 10–78 (QLLYATVRQR…QGKGTFVQSQ (69 aa)). The segment at residues 38–57 (ENELCTQYNVSRITIRKAIS) is a DNA-binding region (H-T-H motif).

The protein operates within carbohydrate metabolism; fructoselysine degradation [regulation]. Its function is as follows. May regulate the transcription of the frlABCDR operon, involved in the utilization of fructoselysine and psicoselysine. This chain is Probable fructoselysine utilization operon transcriptional repressor (frlR), found in Shigella flexneri.